The sequence spans 358 residues: Triacylglycerol lipase (358 aa).

An N-terminal signal peptide occupies residues methionine 1–alanine 39. The AB hydrolase-1 domain maps to tyrosine 48–glutamate 327. Leucine 56 lines the substrate pocket. The active-site Nucleophile is the serine 126. Position 127 (glutamine 127) interacts with substrate. Cysteines 229 and 308 form a disulfide. Position 280 (aspartate 280) interacts with Ca(2+). Catalysis depends on charge relay system residues aspartate 302 and histidine 324. Positions 326, 330, and 334 each coordinate Ca(2+).

The protein belongs to the AB hydrolase superfamily. Pseudomonas lipase family. As to quaternary structure, monomer. Interacts with lipase-specific foldase Lif. Ca(2+) serves as cofactor.

The protein resides in the secreted. The enzyme catalyses a triacylglycerol + H2O = a diacylglycerol + a fatty acid + H(+). Its function is as follows. Catalyzes the hydrolysis of triacylglycerol. This is Triacylglycerol lipase from Burkholderia plantarii.